The following is a 1297-amino-acid chain: Insulin receptor-related protein (1297 aa).

The signal sequence occupies residues 1–26; the sequence is MAVPSLWPWGACLPVIFLSLGFGLDT. N-linked (GlcNAc...) asparagine glycosylation is present at Asn47. 9 disulfide bridges follow: Cys214-Cys222, Cys216-Cys228, Cys229-Cys237, Cys233-Cys246, Cys249-Cys258, Cys262-Cys274, Cys280-Cys300, Cys304-Cys317, and Cys320-Cys324. Asn311 is a glycosylation site (N-linked (GlcNAc...) asparagine). Residues Asn411, Asn492, Asn528, Asn616, and Asn634 are each glycosylated (N-linked (GlcNAc...) asparagine). Fibronectin type-III domains follow at residues 483–603 and 607–707; these read QTRT…TLPA and VPQD…AQEA. Cys657 and Cys864 are disulfide-bonded. Disordered regions lie at residues 666–687 and 732–758; these read SNNDPRFDGEDGDPEAEMESDC and SINKSPQRDSGRHRRAAGPLRLGGNSS. Acidic residues predominate over residues 675–685; the sequence is EDGDPEAEMES. The Extracellular portion of the chain corresponds to 747–921; it reads AAGPLRLGGN…PEEEDAGGLH (175 aa). Asn756, Asn885, and Asn898 each carry an N-linked (GlcNAc...) asparagine glycan. In terms of domain architecture, Fibronectin type-III 3 spans 818–913; that stretch reads IPGKVAWEAS…SVAFYILGPE (96 aa). The helical transmembrane segment at 922-943 threads the bilayer; it reads VLLTATPVGLTLLIVLAALGFF. The Cytoplasmic portion of the chain corresponds to 944–1297; the sequence is YGKKRNRTLY…CSPQNGGPGH (354 aa). In terms of domain architecture, Protein kinase spans 979–1254; it reads ISIIRELGQG…SIQEELRPSF (276 aa). Residues 985–993 and Lys1013 contribute to the ATP site; that span reads LGQGSFGMV. The active-site Proton acceptor is the Asp1115. A phosphotyrosine; by autocatalysis mark is found at Tyr1145 and Tyr1146. The tract at residues 1267 to 1297 is disordered; sequence GARGSLPTTDAEPDSSPTPRDCSPQNGGPGH. The segment covering 1281–1297 has biased composition (polar residues); that stretch reads SSPTPRDCSPQNGGPGH.

This sequence belongs to the protein kinase superfamily. Tyr protein kinase family. Insulin receptor subfamily. Probable tetramer of 2 alpha and 2 beta chains linked by disulfide bonds. The alpha chains contribute to the formation of the ligand-binding domain, while the beta chains carry the kinase domain. In terms of processing, autophosphorylated on tyrosine residues between pH 7.9 and pH 10.5.

It is found in the membrane. It carries out the reaction L-tyrosyl-[protein] + ATP = O-phospho-L-tyrosyl-[protein] + ADP + H(+). In terms of biological role, receptor with tyrosine-protein kinase activity. Functions as a pH sensing receptor which is activated by increased extracellular pH. Activates an intracellular signaling pathway that involves IRS1 and AKT1/PKB. The sequence is that of Insulin receptor-related protein (INSRR) from Homo sapiens (Human).